The sequence spans 661 residues: MRLKNLTFIIILIISGELYAEEKPCGFPHVENGRIAQYYYTFKSFYFPMSIDKKLSFFCLAGYTTESGRQEEQTTCTTEGWSPEPRCFKKCTKPDLSNGYISDVKLLYKIQENMRYGCASGYKTTGGKDEEVVQCLSDGWSSQPTCRKEHETCLAPELYNGNYSTTQKTFKVKDKVQYECATGYYTAGGKKTEEVECLTYGWSLTPKCTKLKCSSLRLIENGYFHPVKQTYEEGDVVQFFCHENYYLSGSDLIQCYNFGWYPESPVCEGRRNRCPPPPLPINSKIQTHSTTYRHGEIVHIECELNFEIHGSAEIRCEDGKWTEPPKCIEGQEKVACEEPPFIENGAANLHSKIYYNGDKVTYACKSGYLLHGSNEITCNRGKWTLPPECVENNENCKHPPVVMNGAVADGILASYATGSSVEYRCNEYYLLRGSKISRCEQGKWSSPPVCLEPCTVNVDYMNRNNIEMKWKYEGKVLHGDLIDFVCKQGYDLSPLTPLSELSVQCNRGEVKYPLCTRKESKGMCTSPPLIKHGVIISSTVDTYENGSSVEYRCFDHHFLEGSREAYCLDGMWTTPPLCLEPCTLSFTEMEKNNLLLKWDFDNRPHILHGEYIEFICRGDTYPAELYITGSILRMQCDRGQLKYPRCIPRQSTLSYQEPLRT.

The N-terminal stretch at 1–20 is a signal peptide; it reads MRLKNLTFIIILIISGELYA. Sushi domains lie at 24 to 88, 89 to 148, 151 to 210, 211 to 269, 272 to 329, 334 to 391, 394 to 452, 453 to 516, 522 to 580, and 581 to 647; these read PCGF…PRCF, KKCT…TCRK, ETCL…KCTK, LKCS…VCEG, NRCP…KCIE, VACE…ECVE, ENCK…VCLE, PCTV…PLCT, GMCT…LCLE, and PCTL…PRCI. 20 cysteine pairs are disulfide-bonded: Cys-25/Cys-76, Cys-59/Cys-87, Cys-91/Cys-135, Cys-118/Cys-146, Cys-153/Cys-197, Cys-180/Cys-208, Cys-213/Cys-255, Cys-241/Cys-267, Cys-274/Cys-316, Cys-302/Cys-327, Cys-336/Cys-378, Cys-364/Cys-389, Cys-396/Cys-439, Cys-425/Cys-450, Cys-454/Cys-505, Cys-486/Cys-515, Cys-524/Cys-567, Cys-553/Cys-578, Cys-582/Cys-636, and Cys-616/Cys-646. N-linked (GlcNAc...) asparagine glycosylation is present at Asn-162. The N-linked (GlcNAc...) asparagine glycan is linked to Asn-545. Positions 617 to 619 match the Cell attachment site motif; it reads RGD.

Tetramer of two A chains (F13A1) and two B (F13B) chains.

The protein localises to the secreted. In terms of biological role, the B chain of factor XIII is not catalytically active, but is thought to stabilize the A subunits and regulate the rate of transglutaminase formation by thrombin. The polypeptide is Coagulation factor XIII B chain (F13B) (Homo sapiens (Human)).